The following is a 221-amino-acid chain: Guanylate kinase (221 aa).

A Guanylate kinase-like domain is found at 20–198; that stretch reads GSLFMVVAPS…ALAELRTVVQ (179 aa). ATP is bound at residue 27-34; sequence APSGAGKS.

Belongs to the guanylate kinase family.

It localises to the cytoplasm. The enzyme catalyses GMP + ATP = GDP + ADP. Functionally, essential for recycling GMP and indirectly, cGMP. The protein is Guanylate kinase of Ralstonia nicotianae (strain ATCC BAA-1114 / GMI1000) (Ralstonia solanacearum).